The following is a 366-amino-acid chain: Methyltransferase calH (366 aa).

S-adenosyl-L-methionine is bound by residues Thr189, Asp216, and 245–246 (NA).

Belongs to the class I-like SAM-binding methyltransferase superfamily.

The protein operates within secondary metabolite biosynthesis. In terms of biological role, methyltransferase; part of the gene cluster that mediates the biosynthesis of calbistrin A and related compounds. Calbistrin A is a secondary metabolite with an interesting structure that was recently found to have bioactivity against leukemia cells. It consists of two polyketides linked by an ester bond: a bicyclic decalin containing polyketide and a linear 12 carbon dioic acid structure. The polyketide synthase calA is probably responsible for forming the decalin moiety. Because calA lacks a designated enoylreductase (ER) domain, the required activity is provided by the trans-enoyl reductase calK. Following release from the PKS, calF then probably catalyzes the oxidation and the subsequent Diels Alder cycloisomerization that lead to the formation of the decalin moiety. The decalin polyketide backbone includes two C-methyl groups, at C7 and C11 in backbone, of which the C7 position is probably methylated by the methyltransferase domain of calA. A candidate for adding the methyl group at C11, if not done by CalA, is the cluster methyltransferase calH. Several additional tailoring enzymes within the cluster could be involved in the modification of the decalin polyketide product. Those include the 3 cytochrome P450 monooxygenases CalE, CalG and CalL, of which one might be responsible for the introduction of the extra hydroxyl group attached to the backbone of the decalin moiety, at position C9 in the backbone, that allows for attachment of the linear moiety. One tailoring enzyme activity that is expected to be involved in biosynthesis of calbistrin is an acyltransferase for connecting the two polyketide synthase products, and which could be performed by the cluster acyltransferase calJ. The enzyme responsible for the biosynthesis of the linear moiety, probably a second PKS, has not been identified yet. The chain is Methyltransferase calH from Penicillium decumbens.